We begin with the raw amino-acid sequence, 183 residues long: MATTMLNRSVIVNKEVAKTPNFPRATKNNKGFASNAAVQKCRDMMVWQPFNNKMFETFSYLPPLTDEQISKQVDYILANSWTPCLEFAASDQAYAGNENCIRMGPVSSTYQDNRYWTMWKLPMFGCTDGSQVLSEIQACTKAFPDAYIRLVCFDANRQVQISGFLVHRPPSATDYRLPADRQV.

The transit peptide at 1–43 directs the protein to the chloroplast; sequence MATTMLNRSVIVNKEVAKTPNFPRATKNNKGFASNAAVQKCRD.

Belongs to the RuBisCO small chain family. Heterohexadecamer of 8 large and 8 small subunits.

The protein resides in the plastid. The protein localises to the chloroplast. In terms of biological role, ruBisCO catalyzes two reactions: the carboxylation of D-ribulose 1,5-bisphosphate, the primary event in carbon dioxide fixation, as well as the oxidative fragmentation of the pentose substrate. Both reactions occur simultaneously and in competition at the same active site. Although the small subunit is not catalytic it is essential for maximal activity. The sequence is that of Ribulose bisphosphate carboxylase small subunit, chloroplastic 3 from Acetabularia peniculus (Green alga).